The chain runs to 61 residues: Insect toxin AaHIT5 (61 aa).

The LCN-type CS-alpha/beta domain occupies 1–61 (DGYIKRHDGC…AWKSETNTCD (61 aa)). 4 disulfides stabilise this stretch: Cys-10–Cys-60, Cys-14–Cys-35, Cys-21–Cys-42, and Cys-25–Cys-44.

Expressed by the venom gland.

It localises to the secreted. Functionally, excitatory insect toxins induce a spastic paralysis. They bind voltage-independently to sodium channels (Nav) and shift the voltage of activation toward more negative potentials thereby affecting sodium channel activation and promoting spontaneous and repetitive firing. This toxin elicits excitatory activity with no flaccid paralysis despite its high degree of sequence similarity with other depressant insect toxins. This toxin is active only on insects. The polypeptide is Insect toxin AaHIT5 (Androctonus australis (Sahara scorpion)).